The following is a 305-amino-acid chain: Ribosomal RNA large subunit methyltransferase F (305 aa).

Belongs to the methyltransferase superfamily. METTL16/RlmF family.

It is found in the cytoplasm. It catalyses the reaction adenosine(1618) in 23S rRNA + S-adenosyl-L-methionine = N(6)-methyladenosine(1618) in 23S rRNA + S-adenosyl-L-homocysteine + H(+). Its function is as follows. Specifically methylates the adenine in position 1618 of 23S rRNA. This chain is Ribosomal RNA large subunit methyltransferase F, found in Bacteroides fragilis (strain YCH46).